Reading from the N-terminus, the 339-residue chain is MAEASSDPGAEEREELLGPTAQWSVEDEEEAVHEQCQHERDRQLQAQDEEGGGHVPERPKQEMLLSLKPSEAPELDEDEGFGDWSQRPEQRQQHEGAQGALDSGEPPQCRSPEGEQEDRPGLHAYEKEDSDEVHLEELSLSKEGPGPEDTVQDNLGAAGAEEEQEEHQKCQQPRTPSPLVLEGTIEQSSPPLSPTTKLIDRTESLNRSIEKSNSVKKSQPDLPISKIDQWLEQYTQAIETAGRTPKLARQASIELPSMAVASTKSRWETGEVQAQSAAKTPSCKDIVAGDMSKKSLWEQKGGSKTSSTIKSTPSGKRYKFVATGHGKYEKVLVEGGPAP.

Positions 1–198 (MAEASSDPGA…SPPLSPTTKL (198 aa)) are disordered. At S24 the chain carries Phosphoserine. Composition is skewed to basic and acidic residues over residues 32-43 (VHEQCQHERDRQ) and 51-61 (GGGHVPERPKQ). S111 carries the phosphoserine modification. The segment covering 117–140 (EDRPGLHAYEKEDSDEVHLEELSL) has biased composition (basic and acidic residues). At T175 the chain carries Phosphothreonine. A phosphoserine mark is found at S177, S188, S189, and S193. A compositionally biased stretch (polar residues) spans 185–196 (IEQSSPPLSPTT). S252 bears the Phosphoserine; by MAPKAPK2 mark. The disordered stretch occupies residues 294-315 (KSLWEQKGGSKTSSTIKSTPSG). A compositionally biased stretch (low complexity) spans 300–315 (KGGSKTSSTIKSTPSG). K327 bears the N6-acetyllysine mark.

In terms of assembly, binds actin. Post-translationally, phosphorylated by casein kinase II, protein kinase C and MAPKAPK2. Phosphorylation by PKC induces translocation from membrane to cytoplasm. Phosphorylation by MAPKAPK2 may regulate neutrophil chemotaxis. In terms of tissue distribution, activated T-lymphocytes.

It localises to the cell membrane. May play a role in mediating neutrophil activation and chemotaxis. This chain is Lymphocyte-specific protein 1 (LSP1), found in Homo sapiens (Human).